The following is a 498-amino-acid chain: Glycylpeptide N-tetradecanoyltransferase 2 (498 aa).

Positions 1–87 (MAEDSESAAS…QPPSKNSTIP (87 aa)) are disordered. The segment covering 15–32 (ELDDQDTCGIDGDNEEET) has biased composition (acidic residues). Serine 38 carries the post-translational modification Phosphoserine. Residues 46–57 (KKKKKKQKRKKE) show a composition bias toward basic residues. Residues 61 to 72 (SGGTKSDSASDS) show a composition bias toward polar residues. Residues histidine 117, tryptophan 122, leucine 250, valine 252, serine 258, arginine 260, valine 261, and alanine 262 each coordinate tetradecanoyl-CoA.

Belongs to the NMT family.

The protein localises to the cytoplasm. It localises to the membrane. It catalyses the reaction N-terminal glycyl-[protein] + tetradecanoyl-CoA = N-tetradecanoylglycyl-[protein] + CoA + H(+). The catalysed reaction is N-terminal glycyl-L-lysyl-[protein] + tetradecanoyl-CoA = N-terminal glycyl-(N(6)-tetradecanoyl)-L-lysyl-[protein] + CoA + H(+). In terms of biological role, adds a myristoyl group to the N-terminal glycine residue of certain cellular and viral proteins. Also able to mediate N-terminal lysine myristoylation of proteins: catalyzes myristoylation of ARF6 on both 'Gly-2' and 'Lys-3'. Lysine myristoylation is required to maintain ARF6 on membranes during the GTPase cycle. This chain is Glycylpeptide N-tetradecanoyltransferase 2 (NMT2), found in Bos taurus (Bovine).